The primary structure comprises 183 residues: ATP synthase subunit delta (183 aa).

This sequence belongs to the ATPase delta chain family. As to quaternary structure, F-type ATPases have 2 components, F(1) - the catalytic core - and F(0) - the membrane proton channel. F(1) has five subunits: alpha(3), beta(3), gamma(1), delta(1), epsilon(1). CF(0) has four main subunits: a(1), b(1), b'(1) and c(10-14). The alpha and beta chains form an alternating ring which encloses part of the gamma chain. F(1) is attached to F(0) by a central stalk formed by the gamma and epsilon chains, while a peripheral stalk is formed by the delta, b and b' chains.

It localises to the cellular thylakoid membrane. Its function is as follows. F(1)F(0) ATP synthase produces ATP from ADP in the presence of a proton or sodium gradient. F-type ATPases consist of two structural domains, F(1) containing the extramembraneous catalytic core and F(0) containing the membrane proton channel, linked together by a central stalk and a peripheral stalk. During catalysis, ATP synthesis in the catalytic domain of F(1) is coupled via a rotary mechanism of the central stalk subunits to proton translocation. Functionally, this protein is part of the stalk that links CF(0) to CF(1). It either transmits conformational changes from CF(0) to CF(1) or is implicated in proton conduction. The chain is ATP synthase subunit delta from Prochlorococcus marinus (strain SARG / CCMP1375 / SS120).